The sequence spans 505 residues: AMP phosphorylase (505 aa).

AMP-binding positions include glycine 170, 196–201, and threonine 205; that span reads SRAITS. Aspartate 258 (proton donor) is an active-site residue. Positions 266 and 290 each coordinate AMP.

It belongs to the thymidine/pyrimidine-nucleoside phosphorylase family. Type 2 subfamily.

The catalysed reaction is AMP + phosphate = alpha-D-ribose 1,5-bisphosphate + adenine. It carries out the reaction CMP + phosphate = cytosine + alpha-D-ribose 1,5-bisphosphate. The enzyme catalyses UMP + phosphate = alpha-D-ribose 1,5-bisphosphate + uracil. Catalyzes the conversion of AMP and phosphate to adenine and ribose 1,5-bisphosphate (R15P). Exhibits phosphorylase activity toward CMP and UMP in addition to AMP. Functions in an archaeal AMP degradation pathway, together with R15P isomerase and RubisCO. The polypeptide is AMP phosphorylase (Methanococcus maripaludis (strain C6 / ATCC BAA-1332)).